The primary structure comprises 429 residues: Adenylosuccinate synthetase (429 aa).

Residues 12-18 and 40-42 each bind GTP; these read GDEGKGK and GHT. Asp-13 serves as the catalytic Proton acceptor. 2 residues coordinate Mg(2+): Asp-13 and Gly-40. IMP-binding positions include 13–16, 38–41, Thr-128, Arg-142, Gln-223, Thr-238, and Arg-302; these read DEGK and NAGH. The active-site Proton donor is the His-41. 298 to 304 contacts substrate; the sequence is VNTGRKR. Residues Arg-304, 330-332, and 412-414 each bind GTP; these read KLD and GVG.

It belongs to the adenylosuccinate synthetase family. Homodimer. Mg(2+) is required as a cofactor.

The protein localises to the cytoplasm. It carries out the reaction IMP + L-aspartate + GTP = N(6)-(1,2-dicarboxyethyl)-AMP + GDP + phosphate + 2 H(+). It functions in the pathway purine metabolism; AMP biosynthesis via de novo pathway; AMP from IMP: step 1/2. Functionally, plays an important role in the de novo pathway of purine nucleotide biosynthesis. Catalyzes the first committed step in the biosynthesis of AMP from IMP. The polypeptide is Adenylosuccinate synthetase (Corynebacterium efficiens (strain DSM 44549 / YS-314 / AJ 12310 / JCM 11189 / NBRC 100395)).